The following is a 398-amino-acid chain: uncharacterized protein (398 aa).

Lys212 bears the N6-(pyridoxal phosphate)lysine mark.

Belongs to the trans-sulfuration enzymes family. It depends on pyridoxal 5'-phosphate as a cofactor.

This is an uncharacterized protein from Schizosaccharomyces pombe (strain 972 / ATCC 24843) (Fission yeast).